A 532-amino-acid polypeptide reads, in one-letter code: Fatty aldehyde dehydrogenase HFD1 (532 aa).

Phosphoserine is present on Ser-111. The chain crosses the membrane as a helical span at residues 134-152 (IIAPFNFPLLLAFAPLAAA). 214-219 (GSPRVG) contributes to the NAD(+) binding site. Active-site residues include Glu-236 and Cys-273.

It belongs to the aldehyde dehydrogenase family.

Its subcellular location is the lipid droplet. The protein resides in the mitochondrion outer membrane. It localises to the endosome membrane. It is found in the cytoplasmic granule membrane. The enzyme catalyses an aldehyde + NAD(+) + H2O = a carboxylate + NADH + 2 H(+). It carries out the reaction hexadecanoate + NADH + 2 H(+) = hexadecanal + NAD(+) + H2O. The catalysed reaction is 4-hydroxybenzaldehyde + NAD(+) + H2O = 4-hydroxybenzoate + NADH + 2 H(+). Catalyzes the oxidation of long-chain aliphatic aldehydes to fatty acids. Responsible for conversion of the sphingosine 1-phosphate (S1P) degradation product hexadecenal to hexadecenoic acid. Involved in coenzyme Q (CoQ) biosynthesis, catalyzing the last step in the tyrosine to 4-hydroxybenzoate (4-HB) pathway. Oxidizes 4-hydroxybenzaldehyde (4-Hbz) to 4-HB, the aromatic precursor for coenzyme Q. This chain is Fatty aldehyde dehydrogenase HFD1 (HFD1), found in Saccharomyces cerevisiae (strain ATCC 204508 / S288c) (Baker's yeast).